The sequence spans 301 residues: Protein ARMCX6 (301 aa).

Positions 1–6 (MGRARE) are mitochondrion outer membrane (MOM)-targeting sequence. Over 1 to 7 (MGRAREM) the chain is Mitochondrial intermembrane. A helical; Signal-anchor transmembrane segment spans residues 8–25 (GWMAAGLMIGAGACYCMY). The segment at 26–36 (KLTMGRSEGNE) is mitochondrion outer membrane (MOM)-targeting sequence. The Cytoplasmic portion of the chain corresponds to 26–301 (KLTMGRSEGN…REMLVEAISP (276 aa)). Positions 69–101 (WSEDGDWDEPGAPGGTEDRRSGGGKANRAHPIK) are disordered.

This sequence belongs to the eutherian X-chromosome-specific Armcx family. As to expression, highly expressed in the developing neural tissues, neural crest derivatives and hind limbs. Also widely expressed in the adult nervous tissue, especially in the forebrain, including the cerebral cortex, hippocampus and thalamus.

The protein resides in the mitochondrion. The protein localises to the mitochondrion outer membrane. Functionally, may regulate the dynamics and distribution of mitochondria in neural cells. This is Protein ARMCX6 (Armcx6) from Mus musculus (Mouse).